We begin with the raw amino-acid sequence, 332 residues long: Lipoyl synthase (332 aa).

Residues Cys-79, Cys-84, Cys-90, Cys-105, Cys-109, Cys-112, and Ser-319 each coordinate [4Fe-4S] cluster. The 218-residue stretch at 91-308 folds into the Radical SAM core domain; it reads FSHGTATFMI…ADYGYEIGFK (218 aa).

This sequence belongs to the radical SAM superfamily. Lipoyl synthase family. [4Fe-4S] cluster serves as cofactor.

The protein resides in the cytoplasm. It carries out the reaction [[Fe-S] cluster scaffold protein carrying a second [4Fe-4S](2+) cluster] + N(6)-octanoyl-L-lysyl-[protein] + 2 oxidized [2Fe-2S]-[ferredoxin] + 2 S-adenosyl-L-methionine + 4 H(+) = [[Fe-S] cluster scaffold protein] + N(6)-[(R)-dihydrolipoyl]-L-lysyl-[protein] + 4 Fe(3+) + 2 hydrogen sulfide + 2 5'-deoxyadenosine + 2 L-methionine + 2 reduced [2Fe-2S]-[ferredoxin]. Its pathway is protein modification; protein lipoylation via endogenous pathway; protein N(6)-(lipoyl)lysine from octanoyl-[acyl-carrier-protein]: step 2/2. Its function is as follows. Catalyzes the radical-mediated insertion of two sulfur atoms into the C-6 and C-8 positions of the octanoyl moiety bound to the lipoyl domains of lipoate-dependent enzymes, thereby converting the octanoylated domains into lipoylated derivatives. The chain is Lipoyl synthase from Hahella chejuensis (strain KCTC 2396).